The primary structure comprises 217 residues: Phosphoribosylformylglycinamidine synthase subunit PurQ (217 aa).

The Glutamine amidotransferase type-1 domain maps to 2–217; sequence SIGVLVFPGS…GRVLLQGLLS (216 aa). The Nucleophile role is filled by Cys-86. Residues His-194 and Glu-196 contribute to the active site.

As to quaternary structure, part of the FGAM synthase complex composed of 1 PurL, 1 PurQ and 2 PurS subunits.

It is found in the cytoplasm. It catalyses the reaction N(2)-formyl-N(1)-(5-phospho-beta-D-ribosyl)glycinamide + L-glutamine + ATP + H2O = 2-formamido-N(1)-(5-O-phospho-beta-D-ribosyl)acetamidine + L-glutamate + ADP + phosphate + H(+). The catalysed reaction is L-glutamine + H2O = L-glutamate + NH4(+). Its pathway is purine metabolism; IMP biosynthesis via de novo pathway; 5-amino-1-(5-phospho-D-ribosyl)imidazole from N(2)-formyl-N(1)-(5-phospho-D-ribosyl)glycinamide: step 1/2. In terms of biological role, part of the phosphoribosylformylglycinamidine synthase complex involved in the purines biosynthetic pathway. Catalyzes the ATP-dependent conversion of formylglycinamide ribonucleotide (FGAR) and glutamine to yield formylglycinamidine ribonucleotide (FGAM) and glutamate. The FGAM synthase complex is composed of three subunits. PurQ produces an ammonia molecule by converting glutamine to glutamate. PurL transfers the ammonia molecule to FGAR to form FGAM in an ATP-dependent manner. PurS interacts with PurQ and PurL and is thought to assist in the transfer of the ammonia molecule from PurQ to PurL. This is Phosphoribosylformylglycinamidine synthase subunit PurQ from Parasynechococcus marenigrum (strain WH8102).